The following is a 130-amino-acid chain: Small ribosomal subunit protein uS8 (130 aa).

Belongs to the universal ribosomal protein uS8 family. In terms of assembly, component of the small ribosomal subunit (SSU). Mature N.crassa ribosomes consist of a small (40S) and a large (60S) subunit. The 40S small subunit contains 1 molecule of ribosomal RNA (18S rRNA) and at least 32 different proteins. The large 60S subunit contains 3 rRNA molecules (26S, 5.8S and 5S rRNA) and at least 42 different proteins.

The protein localises to the cytoplasm. Component of the ribosome, a large ribonucleoprotein complex responsible for the synthesis of proteins in the cell. The small ribosomal subunit (SSU) binds messenger RNAs (mRNAs) and translates the encoded message by selecting cognate aminoacyl-transfer RNA (tRNA) molecules. The large subunit (LSU) contains the ribosomal catalytic site termed the peptidyl transferase center (PTC), which catalyzes the formation of peptide bonds, thereby polymerizing the amino acids delivered by tRNAs into a polypeptide chain. The nascent polypeptides leave the ribosome through a tunnel in the LSU and interact with protein factors that function in enzymatic processing, targeting, and the membrane insertion of nascent chains at the exit of the ribosomal tunnel. The protein is Small ribosomal subunit protein uS8 (crp-27) of Neurospora crassa (strain ATCC 24698 / 74-OR23-1A / CBS 708.71 / DSM 1257 / FGSC 987).